The sequence spans 64 residues: Protein DsrB (64 aa).

It belongs to the DsrB family.

The polypeptide is Protein DsrB (Salmonella arizonae (strain ATCC BAA-731 / CDC346-86 / RSK2980)).